Reading from the N-terminus, the 398-residue chain is L-rhamnonate dehydratase (398 aa).

2 residues coordinate substrate: histidine 22 and arginine 48. Aspartate 214, glutamate 241, and glutamate 269 together coordinate Mg(2+). The Proton acceptor role is filled by histidine 319. A substrate-binding site is contributed by glutamate 339.

The protein belongs to the mandelate racemase/muconate lactonizing enzyme family. RhamD subfamily. In terms of assembly, homooctamer; tetramer of dimers. Mg(2+) is required as a cofactor.

It catalyses the reaction L-rhamnonate = 2-dehydro-3-deoxy-L-rhamnonate + H2O. Functionally, catalyzes the dehydration of L-rhamnonate to 2-keto-3-deoxy-L-rhamnonate (KDR). The polypeptide is L-rhamnonate dehydratase (Verminephrobacter eiseniae (strain EF01-2)).